The primary structure comprises 416 residues: 4-hydroxy-3-methylbut-2-en-1-yl diphosphate synthase (flavodoxin) (416 aa).

[4Fe-4S] cluster contacts are provided by C304, C307, C350, and E357.

The protein belongs to the IspG family. It depends on [4Fe-4S] cluster as a cofactor.

It catalyses the reaction (2E)-4-hydroxy-3-methylbut-2-enyl diphosphate + oxidized [flavodoxin] + H2O + 2 H(+) = 2-C-methyl-D-erythritol 2,4-cyclic diphosphate + reduced [flavodoxin]. Its pathway is isoprenoid biosynthesis; isopentenyl diphosphate biosynthesis via DXP pathway; isopentenyl diphosphate from 1-deoxy-D-xylulose 5-phosphate: step 5/6. In terms of biological role, converts 2C-methyl-D-erythritol 2,4-cyclodiphosphate (ME-2,4cPP) into 1-hydroxy-2-methyl-2-(E)-butenyl 4-diphosphate. The sequence is that of 4-hydroxy-3-methylbut-2-en-1-yl diphosphate synthase (flavodoxin) from Allorhizobium ampelinum (strain ATCC BAA-846 / DSM 112012 / S4) (Agrobacterium vitis (strain S4)).